Reading from the N-terminus, the 590-residue chain is Complement component C8 beta chain (590 aa).

Positions 1-32 are cleaved as a signal peptide; that stretch reads MKKSWTWTWRVPAELLLLCAALGCLCVPGSRS. The propeptide occupies 33 to 54; the sequence is ERPRSLEPTVVNRSLAKSRHSR. Asparagine 44 is a glycosylation site (N-linked (GlcNAc...) asparagine). One can recognise a TSP type-1 1 domain in the interval 64-117; the sequence is DCELSSWSSWTMCDPCQKKRYRHAYLLRPSQFNGEPCNFSDKEVEDCATSRPCR. Disulfide bonds link cysteine 65-cysteine 100, cysteine 76-cysteine 110, cysteine 79-cysteine 116, cysteine 122-cysteine 133, cysteine 127-cysteine 146, cysteine 140-cysteine 155, and cysteine 162-cysteine 200. Tryptophan 70 and tryptophan 73 each carry a C-linked (Man) tryptophan glycan. A glycan (N-linked (GlcNAc...) asparagine) is linked at asparagine 101. The LDL-receptor class A domain occupies 120 to 157; it reads VRCEGFVCAQTGRCVNRRLLCNGDNDCGDQSDEANCRK. Residues leucine 138, asparagine 141, aspartate 143, aspartate 145, aspartate 151, and glutamate 152 each contribute to the Ca(2+) site. The 347-residue stretch at 158–504 folds into the MACPF domain; it reads IYKKCHHEME…EFQGEVSPCR (347 aa). A run of 4 beta stranded transmembrane segments spans residues 252–259, 262–269, 379–386, and 392–399; these read STFNLGFK, SIFEFGIN, AKNDFKLG, and VYVSLGVS. A disulfide bond links cysteine 378 and cysteine 403. Threonine 418 bears the Phosphothreonine mark. 4 cysteine pairs are disulfide-bonded: cysteine 503-cysteine 550, cysteine 505-cysteine 521, cysteine 508-cysteine 523, and cysteine 525-cysteine 534. The EGF-like domain maps to 505-535; sequence CAPCQGNGVPVQKGSRCDCICPVGFQGSACE. A TSP type-1 2 domain is found at 545-588; it reads DGRWSCWSRWSSCSGGQKTRRRQCNNPAPQDGGSPCSGPASETL. Residues tryptophan 551 and tryptophan 554 are each glycosylated (C-linked (Man) tryptophan). Cysteine 557 and cysteine 590 are oxidised to a cystine. The tract at residues 557 to 590 is disordered; the sequence is CSGGQKTRRRQCNNPAPQDGGSPCSGPASETLAC.

This sequence belongs to the complement C6/C7/C8/C9 family. In terms of assembly, heterotrimer of 3 chains: alpha (C8A), beta (C8B) and gamma (C8G); the alpha and gamma chains are disulfide bonded. Component of the membrane attack complex (MAC), composed of complement C5b, C6, C7, C8A, C8B, C8G and multiple copies of the pore-forming subunit C9. N-glycosylated; contains one or two bound glycans. Not O-glycosylated.

It is found in the secreted. Its subcellular location is the target cell membrane. With respect to regulation, membrane attack complex (MAC) assembly is inhibited by CD59, thereby protecting self-cells from damage during complement activation. CD59 acts by binding to the beta-haipins of C8 (C8A and C8B), forming an intermolecular beta-sheet that prevents incorporation of the multiple copies of C9 required for complete formation of the osmolytic pore. MAC assembly is also inhibited by clusterin (CLU) chaperones that inhibit polymerization of C9. In terms of biological role, component of the membrane attack complex (MAC), a multiprotein complex activated by the complement cascade, which inserts into a target cell membrane and forms a pore, leading to target cell membrane rupture and cell lysis. The MAC is initiated by proteolytic cleavage of C5 into complement C5b in response to the classical, alternative, lectin and GZMK complement pathways. The complement pathways consist in a cascade of proteins that leads to phagocytosis and breakdown of pathogens and signaling that strengthens the adaptive immune system. C8B, together with C8A and C8G, inserts into the target membrane, but does not form pores by itself. During MAC assembly, associates with C5b, C6 and C7 to form the C5b8 intermediate complex that inserts into the target membrane and traverses the bilayer increasing membrane rigidity. The sequence is that of Complement component C8 beta chain (C8B) from Oryctolagus cuniculus (Rabbit).